We begin with the raw amino-acid sequence, 189 residues long: Adenylate kinase (189 aa).

10-15 (AAGKGT) provides a ligand contact to ATP. Residues 30-59 (STGDMLRAAIASGSELGQKVKGVLDRGELV) form an NMP region. Residues Thr31, Arg36, 57-59 (ELV), 85-88 (GFPR), and Gln92 contribute to the AMP site. Residues 126–136 (KRFAEQGRPDD) are LID. Arg127 is an ATP binding site. Arg133 and Arg144 together coordinate AMP. Residue Ala172 coordinates ATP.

Belongs to the adenylate kinase family. In terms of assembly, monomer.

It is found in the cytoplasm. The enzyme catalyses AMP + ATP = 2 ADP. Its pathway is purine metabolism; AMP biosynthesis via salvage pathway; AMP from ADP: step 1/1. Its function is as follows. Catalyzes the reversible transfer of the terminal phosphate group between ATP and AMP. Plays an important role in cellular energy homeostasis and in adenine nucleotide metabolism. The chain is Adenylate kinase from Caulobacter sp. (strain K31).